The sequence spans 85 residues: Sec-independent protein translocase protein TatA (85 aa).

A helical membrane pass occupies residues 7-27 (VFGSLGWTEILLILFIALLLF). Residues 50–85 (LTGESDDSSQQISQEQERSVPKEETKTSKSKKSKSA) form a disordered region. Residues 64–76 (EQERSVPKEETKT) are compositionally biased toward basic and acidic residues.

This sequence belongs to the TatA/E family. As to quaternary structure, forms a complex with TatC.

Its subcellular location is the cell inner membrane. Part of the twin-arginine translocation (Tat) system that transports large folded proteins containing a characteristic twin-arginine motif in their signal peptide across membranes. TatA could form the protein-conducting channel of the Tat system. This Leptospira interrogans serogroup Icterohaemorrhagiae serovar Lai (strain 56601) protein is Sec-independent protein translocase protein TatA.